Here is a 152-residue protein sequence, read N- to C-terminus: Small ribosomal subunit protein uS8m (152 aa).

It belongs to the universal ribosomal protein uS8 family.

It is found in the mitochondrion. The chain is Small ribosomal subunit protein uS8m (mrps8) from Dictyostelium citrinum (Slime mold).